The sequence spans 323 residues: Leucine-rich repeat-containing protein 46 (323 aa).

LRR repeat units follow at residues 49 to 70 (ELETVRLDGEGITCIGNLEKLR), 71 to 92 (NIHSLYLQSNKIQRIENLACIT), 93 to 114 (SLRFLSLARNQIRHVENLLDLQ), and 115 to 135 (YLQFLDLSENLIETLKLDELP). In terms of domain architecture, LRRCT spans 146-188 (NPCTNQEGYRKMVIGALPLLLDLDKQPILERWTSDEEDKSSDD). The residue at position 178 (T178) is a Phosphothreonine. Phosphoserine occurs at positions 179, 185, and 186. The stretch at 203–228 (RGFFKDLEQELHQHQERRQQAALTEH) forms a coiled coil. The interval 249 to 323 (MAGDCSSTAT…TKMTNKKSTK (75 aa)) is disordered. Low complexity predominate over residues 267–316 (PKATSSTQTASTTKKQVSKNQKSSVQARKGALAATTSKTSQAATPSMTKM). S303 bears the Phosphoserine mark.

Testis-specific (at protein level).

It localises to the cell projection. Its subcellular location is the cilium. It is found in the flagellum. Functionally, required for normal spermatogenesis and male fertility. Plays an important role in sperm flagellum biogenesis. This Mus musculus (Mouse) protein is Leucine-rich repeat-containing protein 46 (Lrrc46).